Here is a 434-residue protein sequence, read N- to C-terminus: 3-phosphoshikimate 1-carboxyvinyltransferase (434 aa).

Positions 15, 16, and 20 each coordinate 3-phosphoshikimate. Phosphoenolpyruvate is bound at residue lysine 15. Residues glycine 96 and arginine 124 each coordinate phosphoenolpyruvate. Residues serine 169, glutamine 171, serine 195, aspartate 319, and lysine 346 each contribute to the 3-phosphoshikimate site. Glutamine 171 provides a ligand contact to phosphoenolpyruvate. Aspartate 319 functions as the Proton acceptor in the catalytic mechanism. Phosphoenolpyruvate-binding residues include arginine 350 and arginine 394.

Belongs to the EPSP synthase family. In terms of assembly, monomer.

The protein resides in the cytoplasm. The catalysed reaction is 3-phosphoshikimate + phosphoenolpyruvate = 5-O-(1-carboxyvinyl)-3-phosphoshikimate + phosphate. It functions in the pathway metabolic intermediate biosynthesis; chorismate biosynthesis; chorismate from D-erythrose 4-phosphate and phosphoenolpyruvate: step 6/7. Its function is as follows. Catalyzes the transfer of the enolpyruvyl moiety of phosphoenolpyruvate (PEP) to the 5-hydroxyl of shikimate-3-phosphate (S3P) to produce enolpyruvyl shikimate-3-phosphate and inorganic phosphate. This chain is 3-phosphoshikimate 1-carboxyvinyltransferase, found in Prosthecochloris aestuarii (strain DSM 271 / SK 413).